The primary structure comprises 409 residues: uncharacterized protein (409 aa).

An EAL domain is found at 1–209 (MRVFVARQPI…GHDLSTHFYS (209 aa)). The HDOD domain occupies 203 to 392 (LSTHFYSYYE…GNQLDKEEAY (190 aa)).

This is an uncharacterized protein from Bacillus subtilis (strain 168).